We begin with the raw amino-acid sequence, 290 residues long: Pyridoxal kinase PdxY (290 aa).

Substrate contacts are provided by residues S9 and T44–Q45. Residues D112, V144, E149, and K182 each contribute to the ATP site. D221 is a substrate binding site.

This sequence belongs to the pyridoxine kinase family. PdxY subfamily. Homodimer. The cofactor is Mg(2+).

The enzyme catalyses pyridoxal + ATP = pyridoxal 5'-phosphate + ADP + H(+). It participates in cofactor metabolism; pyridoxal 5'-phosphate salvage; pyridoxal 5'-phosphate from pyridoxal: step 1/1. In terms of biological role, pyridoxal kinase involved in the salvage pathway of pyridoxal 5'-phosphate (PLP). Catalyzes the phosphorylation of pyridoxal to PLP. This is Pyridoxal kinase PdxY from Vibrio vulnificus (strain CMCP6).